Here is a 308-residue protein sequence, read N- to C-terminus: Putative lipid kinase SH2167 (308 aa).

Positions Met-1–Tyr-139 constitute a DAGKc domain. ATP is bound by residues Ser-44, Gly-74–Glu-80, and Thr-101. Positions 220, 223, and 225 each coordinate Mg(2+). Glu-281 serves as the catalytic Proton acceptor.

This sequence belongs to the diacylglycerol/lipid kinase family. The cofactor is Mg(2+).

May catalyze the ATP-dependent phosphorylation of lipids other than diacylglycerol (DAG). The chain is Putative lipid kinase SH2167 from Staphylococcus haemolyticus (strain JCSC1435).